Here is a 136-residue protein sequence, read N- to C-terminus: Cytochrome c-550 (136 aa).

Residues Met-1–Ala-28 form the signal peptide. Heme c contacts are provided by Cys-41, Cys-44, His-45, and Met-107.

Binds 1 heme c group covalently per subunit. In terms of processing, the N-terminus is blocked.

The protein localises to the periplasm. Plays a role in bacteroid respiration under conditions of oxygen limitation. Required for electron-transfer during denitrification. The protein is Cytochrome c-550 (cycA) of Bradyrhizobium diazoefficiens (strain JCM 10833 / BCRC 13528 / IAM 13628 / NBRC 14792 / USDA 110).